The sequence spans 396 residues: NADH-quinone oxidoreductase subunit D 1 (396 aa).

It belongs to the complex I 49 kDa subunit family. In terms of assembly, NDH-1 is composed of 14 different subunits. Subunits NuoB, C, D, E, F, and G constitute the peripheral sector of the complex.

The protein localises to the cell inner membrane. It catalyses the reaction a quinone + NADH + 5 H(+)(in) = a quinol + NAD(+) + 4 H(+)(out). Functionally, NDH-1 shuttles electrons from NADH, via FMN and iron-sulfur (Fe-S) centers, to quinones in the respiratory chain. The immediate electron acceptor for the enzyme in this species is believed to be ubiquinone. Couples the redox reaction to proton translocation (for every two electrons transferred, four hydrogen ions are translocated across the cytoplasmic membrane), and thus conserves the redox energy in a proton gradient. This is NADH-quinone oxidoreductase subunit D 1 from Rhizobium etli (strain ATCC 51251 / DSM 11541 / JCM 21823 / NBRC 15573 / CFN 42).